The chain runs to 291 residues: Sulfotransferase 1A1 (291 aa).

Lys-44 to Trp-49 contacts 3'-phosphoadenylyl sulfate. Residue Lys-102–His-104 coordinates substrate. The active-site Proton acceptor is the His-104. Residues Arg-126, Ser-134, Tyr-189, Thr-223–Met-228, and Phe-251–Gly-255 contribute to the 3'-phosphoadenylyl sulfate site. Position 134 is a phosphoserine (Ser-134).

It belongs to the sulfotransferase 1 family. As to quaternary structure, homodimer. In terms of processing, the N-terminus is blocked. Liver, kidney, heart and colon.

The protein localises to the cytoplasm. The catalysed reaction is a phenol + 3'-phosphoadenylyl sulfate = an aryl sulfate + adenosine 3',5'-bisphosphate + H(+). It catalyses the reaction 17beta-estradiol + 3'-phosphoadenylyl sulfate = 17beta-estradiol 3-sulfate + adenosine 3',5'-bisphosphate + H(+). It carries out the reaction 4-ethylphenol + 3'-phosphoadenylyl sulfate = 4-ethylphenyl sulfate + adenosine 3',5'-bisphosphate + H(+). The enzyme catalyses 4-nitrophenol + 3'-phosphoadenylyl sulfate = 4-nitrophenyl sulfate + adenosine 3',5'-bisphosphate. The catalysed reaction is dopamine + 3'-phosphoadenylyl sulfate = dopamine 3-O-sulfate + adenosine 3',5'-bisphosphate + H(+). It catalyses the reaction dopamine + 3'-phosphoadenylyl sulfate = dopamine 4-O-sulfate + adenosine 3',5'-bisphosphate + H(+). It carries out the reaction 3,3',5-triiodo-L-thyronine + 3'-phosphoadenylyl sulfate = 3,3',5-triiodo-L-thyronine sulfate + adenosine 3',5'-bisphosphate + H(+). The enzyme catalyses 3,3',5'-triiodo-L-thyronine + 3'-phosphoadenylyl sulfate = 3,3',5'-triiodo-L-thyronine sulfate + adenosine 3',5'-bisphosphate + H(+). The catalysed reaction is 3,3'-diiodo-L-thyronine + 3'-phosphoadenylyl sulfate = 3,3'-diiodo-L-thyronine sulfate + adenosine 3',5'-bisphosphate + H(+). It catalyses the reaction L-thyroxine + 3'-phosphoadenylyl sulfate = L-thyroxine sulfate + adenosine 3',5'-bisphosphate + H(+). In terms of biological role, sulfotransferase that utilizes 3'-phospho-5'-adenylyl sulfate (PAPS) as sulfonate donor to catalyze the sulfate conjugation of a wide variety of acceptor molecules bearing a hydroxyl or an amine group. Sulfonation increases the water solubility of most compounds, and therefore their renal excretion, but it can also result in bioactivation to form active metabolites. Displays broad substrate specificity for small phenolic compounds. Plays an important roles in the sulfonation of endogenous molecules such as steroid hormones. Mediates the sulfate conjugation of a variety of xenobiotics, including the drugs acetaminophen and minoxidil. Mediates also the metabolic activation of carcinogenic N-hydroxyarylamines leading to highly reactive intermediates capable of forming DNA adducts, potentially resulting in mutagenesis. May play a role in gut microbiota-host metabolic interaction. O-sulfonates 4-ethylphenol (4-EP), a dietary tyrosine-derived metabolite produced by gut bacteria. The product 4-EPS crosses the blood-brain barrier and may negatively regulate oligodendrocyte maturation and myelination, affecting the functional connectivity of different brain regions associated with the limbic system. Catalyzes the sulfate conjugation of dopamine. Catalyzes the sulfation of T4 (L-thyroxine/3,5,3',5'-tetraiodothyronine), T3 (3,5,3'-triiodothyronine), rT3 (3,3',5'-triiodothyronine) and 3,3'-T2 (3,3'-diiodothyronine), with a substrate preference of 3,3'-T2 &gt; rT3 &gt; T3 &gt; T4. The chain is Sulfotransferase 1A1 (Sult1a1) from Rattus norvegicus (Rat).